The primary structure comprises 148 residues: UPF0756 membrane protein CKO_01811 (148 aa).

Transmembrane regions (helical) follow at residues 14–34 (ALGF…LIIV), 51–71 (LTVG…SGSL), 86–106 (LVAI…VTLM), and 121–141 (VLGV…AGLV).

The protein belongs to the UPF0756 family.

The protein localises to the cell membrane. The protein is UPF0756 membrane protein CKO_01811 of Citrobacter koseri (strain ATCC BAA-895 / CDC 4225-83 / SGSC4696).